The primary structure comprises 333 residues: Glycerol-3-phosphate dehydrogenase [NAD(P)+] (333 aa).

NADPH contacts are provided by W13, K33, and K108. Positions 108 and 138 each coordinate sn-glycerol 3-phosphate. NADPH is bound at residue S142. Residues K193, D246, S256, R257, and N258 each contribute to the sn-glycerol 3-phosphate site. Residue K193 is the Proton acceptor of the active site. R257 is an NADPH binding site. NADPH contacts are provided by V281 and E283.

This sequence belongs to the NAD-dependent glycerol-3-phosphate dehydrogenase family.

The protein localises to the cytoplasm. It carries out the reaction sn-glycerol 3-phosphate + NAD(+) = dihydroxyacetone phosphate + NADH + H(+). It catalyses the reaction sn-glycerol 3-phosphate + NADP(+) = dihydroxyacetone phosphate + NADPH + H(+). The protein operates within membrane lipid metabolism; glycerophospholipid metabolism. Functionally, catalyzes the reduction of the glycolytic intermediate dihydroxyacetone phosphate (DHAP) to sn-glycerol 3-phosphate (G3P), the key precursor for phospholipid synthesis. The protein is Glycerol-3-phosphate dehydrogenase [NAD(P)+] of Bifidobacterium longum (strain NCC 2705).